A 366-amino-acid polypeptide reads, in one-letter code: Chorismate synthase (366 aa).

Arg48 is a binding site for NADP(+). FMN is bound by residues 125–127 (RSS), Gly283, 298–302 (KPTPS), and Arg324.

Belongs to the chorismate synthase family. In terms of assembly, homotetramer. FMNH2 serves as cofactor.

The catalysed reaction is 5-O-(1-carboxyvinyl)-3-phosphoshikimate = chorismate + phosphate. Its pathway is metabolic intermediate biosynthesis; chorismate biosynthesis; chorismate from D-erythrose 4-phosphate and phosphoenolpyruvate: step 7/7. Functionally, catalyzes the anti-1,4-elimination of the C-3 phosphate and the C-6 proR hydrogen from 5-enolpyruvylshikimate-3-phosphate (EPSP) to yield chorismate, which is the branch point compound that serves as the starting substrate for the three terminal pathways of aromatic amino acid biosynthesis. This reaction introduces a second double bond into the aromatic ring system. The chain is Chorismate synthase from Lachnospira eligens (strain ATCC 27750 / DSM 3376 / VPI C15-48 / C15-B4) (Eubacterium eligens).